Reading from the N-terminus, the 170-residue chain is MKVILRADVENLGKLGDIVEVRPGYGRNFLLPQGMAMAATASNMKVFEMERRKLQAEMDAVRATATTLAEKIAAADVSIAVRVGENDKLYGSVTPAHIADALAEAGVEIDRRRILLDAPIRNLGEYDVRVRLHADVEAVIALKVVAEGRTEEADAEESAAEEPAVEEAAE.

Positions 149 to 170 (RTEEADAEESAAEEPAVEEAAE) are disordered. Residues 153–170 (ADAEESAAEEPAVEEAAE) are compositionally biased toward acidic residues.

The protein belongs to the bacterial ribosomal protein bL9 family.

Functionally, binds to the 23S rRNA. The protein is Large ribosomal subunit protein bL9 of Oleidesulfovibrio alaskensis (strain ATCC BAA-1058 / DSM 17464 / G20) (Desulfovibrio alaskensis).